The following is a 65-amino-acid chain: Large ribosomal subunit protein bL32 (65 aa).

The protein belongs to the bacterial ribosomal protein bL32 family.

The chain is Large ribosomal subunit protein bL32 from Phytoplasma australiense.